A 354-amino-acid polypeptide reads, in one-letter code: S-adenosylmethionine:tRNA ribosyltransferase-isomerase (354 aa).

It belongs to the QueA family. As to quaternary structure, monomer.

Its subcellular location is the cytoplasm. The catalysed reaction is 7-aminomethyl-7-carbaguanosine(34) in tRNA + S-adenosyl-L-methionine = epoxyqueuosine(34) in tRNA + adenine + L-methionine + 2 H(+). It participates in tRNA modification; tRNA-queuosine biosynthesis. Functionally, transfers and isomerizes the ribose moiety from AdoMet to the 7-aminomethyl group of 7-deazaguanine (preQ1-tRNA) to give epoxyqueuosine (oQ-tRNA). This Salmonella dublin (strain CT_02021853) protein is S-adenosylmethionine:tRNA ribosyltransferase-isomerase.